A 321-amino-acid chain; its full sequence is Lipoyl synthase (321 aa).

Residues Cys-68, Cys-73, Cys-79, Cys-94, Cys-98, Cys-101, and Ser-308 each coordinate [4Fe-4S] cluster. Residues 80-297 enclose the Radical SAM core domain; it reads FNHGTATFMI…KAEAMAMGFT (218 aa).

The protein belongs to the radical SAM superfamily. Lipoyl synthase family. [4Fe-4S] cluster serves as cofactor.

The protein resides in the cytoplasm. It catalyses the reaction [[Fe-S] cluster scaffold protein carrying a second [4Fe-4S](2+) cluster] + N(6)-octanoyl-L-lysyl-[protein] + 2 oxidized [2Fe-2S]-[ferredoxin] + 2 S-adenosyl-L-methionine + 4 H(+) = [[Fe-S] cluster scaffold protein] + N(6)-[(R)-dihydrolipoyl]-L-lysyl-[protein] + 4 Fe(3+) + 2 hydrogen sulfide + 2 5'-deoxyadenosine + 2 L-methionine + 2 reduced [2Fe-2S]-[ferredoxin]. It functions in the pathway protein modification; protein lipoylation via endogenous pathway; protein N(6)-(lipoyl)lysine from octanoyl-[acyl-carrier-protein]: step 2/2. Its function is as follows. Catalyzes the radical-mediated insertion of two sulfur atoms into the C-6 and C-8 positions of the octanoyl moiety bound to the lipoyl domains of lipoate-dependent enzymes, thereby converting the octanoylated domains into lipoylated derivatives. In Yersinia pseudotuberculosis serotype O:1b (strain IP 31758), this protein is Lipoyl synthase.